Here is a 268-residue protein sequence, read N- to C-terminus: Hydroxyacylglutathione hydrolase (268 aa).

Residues His-56, His-58, Asp-60, His-61, His-113, Asp-130, and His-168 each contribute to the Zn(2+) site.

It belongs to the metallo-beta-lactamase superfamily. Glyoxalase II family. Monomer. The cofactor is Zn(2+).

It carries out the reaction an S-(2-hydroxyacyl)glutathione + H2O = a 2-hydroxy carboxylate + glutathione + H(+). It functions in the pathway secondary metabolite metabolism; methylglyoxal degradation; (R)-lactate from methylglyoxal: step 2/2. Functionally, thiolesterase that catalyzes the hydrolysis of S-D-lactoyl-glutathione to form glutathione and D-lactic acid. This is Hydroxyacylglutathione hydrolase from Hydrogenovibrio crunogenus (strain DSM 25203 / XCL-2) (Thiomicrospira crunogena).